A 1016-amino-acid polypeptide reads, in one-letter code: FHIP family protein Bm1_18400 (1016 aa).

Disordered stretches follow at residues 586 to 608 (DSLR…RSSF) and 757 to 778 (SDGF…PLGK).

The protein belongs to the FHIP family.

The sequence is that of FHIP family protein Bm1_18400 from Brugia malayi (Filarial nematode worm).